The chain runs to 461 residues: MDQSNRYANLNLKESDLIAGGRHVLCAYIMKPKAGFGNFVETAAHFAAESSTGTNVEVSTTDDFTRGVDALVYEVDEAKELMKIAYPIELFDRNVIDGRAMIASFLTLTIGNNQGMGDVEYAKMHDFYVPPAYLRLFDGPSTTIKDLWRVLGRPVVDGGFIVGTIIKPKLGLRPQPFADACYDFWLGGDFIKNDEPQGNQVFAPFKDTVRAVNDAMRRAQDATGQPKLFSFNITADDHYEMLARGEYILETFGENADHVAFLVDGYVAGPAAVTTARRAFPKQYLHYHRAGHGAVTSPQSKRGYTAFVLSKMARLQGASGIHVGTMGYGKMEGEASDRDSAFMITQDSAEGPYFKQEWLGMNPTTPIISGGMNALRMPGFFANLGHSNLIMTAGGGAFGHIDGGAAGARSLRQAEQCWKQGADPVAFAKDHREFARAFESFPNDADKLYPNWRNMLKLAAA.

N112 lines the substrate pocket. K167 (proton acceptor) is an active-site residue. K169 contacts substrate. Mg(2+)-binding residues include K192, D194, and E195. N6-carboxylysine is present on K192. Residue H288 is the Proton acceptor of the active site. The substrate site is built by R289, H322, and S369.

This sequence belongs to the RuBisCO large chain family. Type II subfamily. In terms of assembly, homodimer. The cofactor is Mg(2+).

The enzyme catalyses 2 (2R)-3-phosphoglycerate + 2 H(+) = D-ribulose 1,5-bisphosphate + CO2 + H2O. It catalyses the reaction D-ribulose 1,5-bisphosphate + O2 = 2-phosphoglycolate + (2R)-3-phosphoglycerate + 2 H(+). RuBisCO catalyzes two reactions: the carboxylation of D-ribulose 1,5-bisphosphate, the primary event in carbon dioxide fixation, as well as the oxidative fragmentation of the pentose substrate. Both reactions occur simultaneously and in competition at the same active site. The polypeptide is Ribulose bisphosphate carboxylase (Rhodopseudomonas palustris (strain BisB5)).